A 380-amino-acid polypeptide reads, in one-letter code: Cytochrome b (380 aa).

4 consecutive transmembrane segments (helical) span residues 34–54 (FGSLLGVCLLTQILTGLLLAM), 78–99 (WLIRNLHANGASFFFICIYLHI), 114–134 (WNTGVILLLTLMATAFVGYVL), and 179–199 (FFALHFLLPFMIAGLTLIHLT). Histidine 84 and histidine 98 together coordinate heme b. Histidine 183 and histidine 197 together coordinate heme b. Residue histidine 202 coordinates a ubiquinone. 4 helical membrane passes run 227-247 (LKDILGFMLMFLPLTTLALFS), 289-309 (LGGVLALAASVLVLFLAPFLH), 321-341 (LSQLLFWILVANLFILTWVGS), and 348-368 (FIIIGQLASLTYFTILLILFP).

It belongs to the cytochrome b family. In terms of assembly, the cytochrome bc1 complex contains 11 subunits: 3 respiratory subunits (MT-CYB, CYC1 and UQCRFS1), 2 core proteins (UQCRC1 and UQCRC2) and 6 low-molecular weight proteins (UQCRH/QCR6, UQCRB/QCR7, UQCRQ/QCR8, UQCR10/QCR9, UQCR11/QCR10 and a cleavage product of UQCRFS1). This cytochrome bc1 complex then forms a dimer. The cofactor is heme b.

Its subcellular location is the mitochondrion inner membrane. Its function is as follows. Component of the ubiquinol-cytochrome c reductase complex (complex III or cytochrome b-c1 complex) that is part of the mitochondrial respiratory chain. The b-c1 complex mediates electron transfer from ubiquinol to cytochrome c. Contributes to the generation of a proton gradient across the mitochondrial membrane that is then used for ATP synthesis. The chain is Cytochrome b (MT-CYB) from Calonectris leucomelas (Streaked shearwater).